The primary structure comprises 288 residues: L-threonine kinase (288 aa).

80-90 (PIAKGMASSTA) serves as a coordination point for ATP.

This sequence belongs to the GHMP kinase family. PduX subfamily.

It is found in the cytoplasm. It catalyses the reaction L-threonine + ATP = O-phospho-L-threonine + ADP + H(+). Its pathway is cofactor biosynthesis; adenosylcobalamin biosynthesis. It functions in the pathway polyol metabolism; 1,2-propanediol degradation. Functionally, L-threonine kinase that catalyzes the conversion of L-threonine to L-threonine-O-3-phosphate. Involved in the de novo synthesis of adenosylcobalamin (coenzyme B12) and the assimilation of cobyric acid. Expression of a cosmid containing the full 21-gene pdu operon in E.coli allows E.coli to grow on 1,2-propanediol (1,2-PD) with the appearance of bacterial microcompartments (BMC) in its cytoplasm. In terms of biological role, the 1,2-PD-specific bacterial microcompartment (BMC) concentrates low levels of 1,2-PD catabolic enzymes, concentrates volatile reaction intermediates thus enhancing pathway flux and keeps the level of toxic, mutagenic propionaldehyde low. This gene probably benefits from its induction via the Pdu promoter, rather than a physical interaction with the BMC. The polypeptide is L-threonine kinase (Citrobacter freundii).